The sequence spans 997 residues: Mannuronan C5-epimerase AlgE2 (997 aa).

7 PbH1 repeats span residues 133–155, 157–179, 180–202, 204–226, 257–279, 280–315, and 320–359; these read DRDVTLERVEIREMSGYGFDPHE, TINLTIRDSVAHDNGLDGFVADF, QIGGVFENNVSYNNDRHGFNIVT, TNDFVLSNNVAYGNGGAGLVVQR, AHDVTLQNAEIYGNGLYGVRVYG, AEDVQILDNYIHDNSQNGSYAEILLQSYDDTAGVSG, and TTGTWIEGNTIVGSANSTYGIQERDDGTDYSSLYANSVSN. Hemolysin-type calcium-binding repeat units lie at residues 388–403, 406–422, 424–439, 557–573, 574–591, 696–711, 713–730, 828–839, 846–862, and 864–880; these read GTAGNDTLGGSDAHET, GLDGNDRLNGGAGNDIL, GGAGRDNLTGGAGADL, GHAGNDTLDGGAGDDIL, VGGAGRDSLTGGAGADVF, GSAGNDSLQGTAADEV, HGGGGRDTLAGGAGADVF, GGDGNDTLSGSS, GGVGNDSLDGGAGNDIL, and GGAGRDTLSGGSGSDIF.

Belongs to the D-mannuronate C5-epimerase family. Requires Ca(2+) as cofactor.

The protein localises to the secreted. It carries out the reaction [(1-&gt;4)-beta-D-mannuronosyl](n) = [alginate](n). The protein operates within glycan biosynthesis; alginate biosynthesis. Inhibited by zinc. In terms of biological role, converts beta-D-mannuronic acid (M) to alpha-L-guluronic acid (G), producing a polymer with gel-forming capacity, required for the formation of the cyst coat. The protein is Mannuronan C5-epimerase AlgE2 of Azotobacter vinelandii.